The chain runs to 80 residues: Secreted transmembrane peptide 3 (80 aa).

A signal peptide spans 1 to 27 (MGLKMSSNALLLSLFLLLLCLFSEIGG). A disordered region spans residues 44 to 80 (IATPPSLTCGGQRLGGPQPRLSPCPRPRPRPRPRTGS). Positions 62–80 (PRLSPCPRPRPRPRPRTGS) match the SCOOP motif motif. A compositionally biased stretch (basic residues) spans 70 to 80 (PRPRPRPRTGS).

Belongs to the serine rich endogenous peptide (SCOOP) phytocytokine family. As to quaternary structure, interacts with MIK2 (via extracellular leucine-rich repeat domain); this interaction triggers the formation of complex between MIK2 and the BAK1/SERK3 and SERK4 coreceptors, and subsequent BAK1 activation by phosphorylation. In terms of tissue distribution, mostly expressed in leaves, and, to a lower extent, in roots, stems, siliques, seeds and flowers.

The protein resides in the cell membrane. The protein localises to the secreted. Its subcellular location is the extracellular space. It localises to the apoplast. It is found in the endoplasmic reticulum. The protein resides in the golgi apparatus. Its function is as follows. Brassicaceae-specific phytocytokine (plant endogenous peptide released into the apoplast) perceived by MIK2 in a BAK1/SERK3 and SERK4 coreceptors-dependent manner, that modulates various physiological and antimicrobial processes including growth prevention and reactive oxygen species (ROS) response regulation. In Arabidopsis thaliana (Mouse-ear cress), this protein is Secreted transmembrane peptide 3.